A 427-amino-acid polypeptide reads, in one-letter code: Glucose-1-phosphate adenylyltransferase (427 aa).

AMP contacts are provided by R40, H46, and R52. Y114 provides a ligand contact to alpha-D-glucose 1-phosphate. R130 lines the AMP pocket. Alpha-D-glucose 1-phosphate is bound by residues G179, E194 to K195, and S212. R386 contacts AMP.

It belongs to the bacterial/plant glucose-1-phosphate adenylyltransferase family. As to quaternary structure, homotetramer.

It catalyses the reaction alpha-D-glucose 1-phosphate + ATP + H(+) = ADP-alpha-D-glucose + diphosphate. The protein operates within glycan biosynthesis; glycogen biosynthesis. Its activity is regulated as follows. Allosterically activated by fructose-1,6-bisphosphate (F16BP) and inhibited by AMP. Involved in the biosynthesis of ADP-glucose, a building block required for the elongation reactions to produce glycogen. Catalyzes the reaction between ATP and alpha-D-glucose 1-phosphate (G1P) to produce pyrophosphate and ADP-Glc. This chain is Glucose-1-phosphate adenylyltransferase, found in Cronobacter sakazakii (strain ATCC BAA-894) (Enterobacter sakazakii).